The following is a 556-amino-acid chain: MKTDVQIAQEAKMLPIADIAAGLGIQDDELELYGKYKAKVSLDVFDRLKDKPDGKLILVTAINPTPAGEGKTTTNVGLSMGLNKIGKKTITALREPSLGPNFGVKGGAAGGGYAQVVPMEDINLHFTGDIHAITTAHNLLAALLDNHLHQGNKLNIDSRRIVWRRVLDMNDRALRNTVIGLGSRGDGVPRQDGFDITVASEIMAILCLSNSLEDLKDRISRMVVAYNLDNQPITVNDLEATGALSLLLKDAIKPNLVQTLENTPAFIHGGPFANIAHGCNSVLATKLGLKLADYVVTEAGFGADLGAEKFFDIKCRFAGLKPDCAVIVATVRALKNHGGVPKAELNNENLEALEKGYRNLEKHIENVQKFGVPAVVAINKFPTDTEAELNFLRKHCAEMGAEVVLSDVWANGGDGGIEMAKKVVEVVESKESNFKPLYDVNASIVEKINTIAKEVYGADGVDFTKSAQTQIKKYEDLGLDKMPICMAKTQYSLSDDPSLIGRPSGFRITVKEIRLSAGAGFLVALTGDIMVMPGLPKVPAANHMDILESGEIIGLF.

Residue 65-72 (TPAGEGKT) participates in ATP binding.

Belongs to the formate--tetrahydrofolate ligase family.

It carries out the reaction (6S)-5,6,7,8-tetrahydrofolate + formate + ATP = (6R)-10-formyltetrahydrofolate + ADP + phosphate. The protein operates within one-carbon metabolism; tetrahydrofolate interconversion. In Alkaliphilus oremlandii (strain OhILAs) (Clostridium oremlandii (strain OhILAs)), this protein is Formate--tetrahydrofolate ligase.